A 226-amino-acid polypeptide reads, in one-letter code: Deoxyribose-phosphate aldolase (226 aa).

E96 serves as the catalytic Proton donor/acceptor. The Schiff-base intermediate with acetaldehyde role is filled by K157. The Proton donor/acceptor role is filled by K185.

It belongs to the DeoC/FbaB aldolase family. DeoC type 1 subfamily.

It is found in the cytoplasm. It carries out the reaction 2-deoxy-D-ribose 5-phosphate = D-glyceraldehyde 3-phosphate + acetaldehyde. The protein operates within carbohydrate degradation; 2-deoxy-D-ribose 1-phosphate degradation; D-glyceraldehyde 3-phosphate and acetaldehyde from 2-deoxy-alpha-D-ribose 1-phosphate: step 2/2. In terms of biological role, catalyzes a reversible aldol reaction between acetaldehyde and D-glyceraldehyde 3-phosphate to generate 2-deoxy-D-ribose 5-phosphate. The sequence is that of Deoxyribose-phosphate aldolase from Gloeobacter violaceus (strain ATCC 29082 / PCC 7421).